Reading from the N-terminus, the 1673-residue chain is Leucine-rich repeat- and IQ domain-containing protein 1 (1673 aa).

2 disordered regions span residues 22 to 48 (ISIS…SDTD) and 189 to 208 (LEEK…KRTF). The stretch at 34 to 59 (NDSVSDTQSDSSDTDLLELPESVLHY) is one LRR 1 repeat. An LRR 2 repeat occupies 216–239 (QCWMRQFEVEKKHLEDLQKQDQDK). One can recognise an IQ 1 domain in the interval 291-320 (RYDAAVKIQATYRASVTYRKYSPIIKEQME). Residues 324-374 (RRAQELKEKEAKIRQKEEEKRRRLEEEQRVEEEKKKKMLEERRRREREYEE) form a disordered region. The span at 326-374 (AQELKEKEAKIRQKEEEKRRRLEEEQRVEEEKKKKMLEERRRREREYEE) shows a compositional bias: basic and acidic residues. The LRR 3 repeat unit spans residues 491 to 516 (LPKLKINENLSKNQCSEQPSDQEFNA). Disordered regions lie at residues 544-658 (ESDT…EEIP) and 679-702 (EGEA…GSHS). Composition is skewed to basic and acidic residues over residues 549–567 (TEEH…ETEK) and 588–602 (EETR…EIKE). Over residues 603–629 (MTQQGGPSDENNSSPISMQKSLPSLTP) the composition is skewed to polar residues. The LRR 4 repeat unit spans residues 641 to 665 (LEEDQETDLKSERIEEIPEEGVLSC). Positions 647-656 (TDLKSERIEE) are enriched in basic and acidic residues. LRR repeat units follow at residues 830-852 (CSNL…LSHC), 853-873 (TRLK…CENL), 874-894 (ENLS…GFDG), 895-919 (CTNL…SLKY), 921-939 (QELT…LCEA), 940-961 (PTIV…IGNC), 962-983 (GLLQ…LRNH), 984-1005 (VLLR…LSSC), 1007-1029 (LPLL…LFHL), 1030-1054 (VSLE…WFNA), and 1067-1090 (PVLQ…VLNG). Disordered stretches follow at residues 1163–1230 (AHEQ…HCEE) and 1308–1330 (PTTT…EERR). 2 stretches are compositionally biased toward polar residues: residues 1168 to 1226 (DVNT…PSTS) and 1308 to 1325 (PTTT…QTTS). 2 IQ domains span residues 1280–1309 (PTKA…MHPT) and 1340–1369 (REKA…AIKD). One copy of the LRR 16 repeat lies at 1378–1405 (EIDLEDFEFDEDALEKDWPALDSTGFPS).

The polypeptide is Leucine-rich repeat- and IQ domain-containing protein 1 (Lrriq1) (Mus musculus (Mouse)).